The chain runs to 118 residues: Ribosome-binding factor A (118 aa).

The protein belongs to the RbfA family. Monomer. Binds 30S ribosomal subunits, but not 50S ribosomal subunits or 70S ribosomes.

It is found in the cytoplasm. Its function is as follows. One of several proteins that assist in the late maturation steps of the functional core of the 30S ribosomal subunit. Associates with free 30S ribosomal subunits (but not with 30S subunits that are part of 70S ribosomes or polysomes). Required for efficient processing of 16S rRNA. May interact with the 5'-terminal helix region of 16S rRNA. This Dehalococcoides mccartyi (strain ATCC BAA-2100 / JCM 16839 / KCTC 5957 / BAV1) protein is Ribosome-binding factor A.